Here is a 710-residue protein sequence, read N- to C-terminus: E3 ubiquitin-protein ligase TRIM9 (710 aa).

The segment at 10–50 (CPVCGSFYREPIILPCSHNLCQACARNILVQTPESESPQSR) adopts an RING-type zinc-finger fold. Thr41 bears the Phosphothreonine mark. Phosphoserine occurs at positions 44, 46, 49, and 53. B box-type zinc fingers lie at residues 163–212 (AAAL…LVPP) and 224–266 (RKVS…VKAL). Zn(2+)-binding residues include Cys168, Cys171, Cys193, His198, Cys229, His232, Cys252, and His258. Residues 273-340 (HKSQLSQALN…KAQLLARVNK (68 aa)) are a coiled coil. In terms of domain architecture, COS spans 374–432 (IKENDPSGFLQISDALIRRVHLTEDQWGKGTLTPRMTTDFDLSLDNSPLLQSIHQLDFV). Residues 440–535 (VPATPILQLE…KTLVLQTSEV (96 aa)) form the Fibronectin type-III domain. A B30.2/SPRY domain is found at 533–702 (SEVAWFAFDP…LHTGLPVPDF (170 aa)).

Interacts with SNAP25. Auto-ubiquitinated. As to expression, brain (at protein level). Expressed in fetal and adult brain.

It localises to the cytoplasmic vesicle. It is found in the secretory vesicle. The protein resides in the synaptic vesicle. The protein localises to the synapse. Its subcellular location is the cytoplasm. It localises to the cytoskeleton. It is found in the cell projection. The protein resides in the dendrite. The enzyme catalyses S-ubiquitinyl-[E2 ubiquitin-conjugating enzyme]-L-cysteine + [acceptor protein]-L-lysine = [E2 ubiquitin-conjugating enzyme]-L-cysteine + N(6)-ubiquitinyl-[acceptor protein]-L-lysine.. The protein operates within protein modification; protein ubiquitination. Its function is as follows. E3 ubiquitin-protein ligase which ubiquitinates itself in cooperation with an E2 enzyme UBE2D2/UBC4 and serves as a targeting signal for proteasomal degradation. May play a role in regulation of neuronal functions. May act as a regulator of synaptic vesicle exocytosis by controlling the availability of SNAP25 for the SNARE complex formation. In Rattus norvegicus (Rat), this protein is E3 ubiquitin-protein ligase TRIM9 (Trim9).